The following is a 314-amino-acid chain: Bifunctional pinoresinol-lariciresinol reductase 3 (314 aa).

NADP(+)-binding positions include 11–17, Arg-36, and Lys-45; that span reads GGTGFIG. Lys-138 functions as the Proton acceptor in the catalytic mechanism. Arg-142 lines the NADP(+) pocket. His-272 contributes to the substrate binding site.

The protein belongs to the NmrA-type oxidoreductase family. Isoflavone reductase subfamily. As to quaternary structure, dimer.

It catalyses the reaction (-)-lariciresinol + NADP(+) = (-)-pinoresinol + NADPH + H(+). The catalysed reaction is (+)-secoisolariciresinol + NADP(+) = (-)-lariciresinol + NADPH + H(+). In terms of biological role, reductase involved in lignan biosynthesis. Catalyzes the enantioselective sequential conversion of (-)-pinoresinol into (-)-lariciresinol and of (-)-lariciresinol into (+)-secoisolariciresinol. Abstracts the 4R-hydride from the NADPH cofactor during catalysis. The polypeptide is Bifunctional pinoresinol-lariciresinol reductase 3 (Thuja plicata (Western red-cedar)).